The following is a 493-amino-acid chain: 1-aminocyclopropane-1-carboxylate synthase CMW33 (493 aa).

N6-(pyridoxal phosphate)lysine is present on K279.

It belongs to the class-I pyridoxal-phosphate-dependent aminotransferase family. In terms of assembly, homodimer. Pyridoxal 5'-phosphate is required as a cofactor.

The catalysed reaction is S-adenosyl-L-methionine = 1-aminocyclopropane-1-carboxylate + S-methyl-5'-thioadenosine + H(+). It participates in alkene biosynthesis; ethylene biosynthesis via S-adenosyl-L-methionine; ethylene from S-adenosyl-L-methionine: step 1/2. Catalyzes the formation of 1-aminocyclopropane-1-carboxylate, a direct precursor of ethylene in higher plants. The chain is 1-aminocyclopropane-1-carboxylate synthase CMW33 (ACS1) from Cucurbita maxima (Pumpkin).